We begin with the raw amino-acid sequence, 73 residues long: Dermaseptin-1 (73 aa).

Residues 1–22 (MAFLKKSIFLALFLGMVSLSIC) form the signal peptide. Residues 23 to 43 (EEEKRENEGEEEQEDDEQSEM) constitute a propeptide, removed in mature form. The interval 25–46 (EKRENEGEEEQEDDEQSEMKRG) is disordered. Residues 30–40 (EGEEEQEDDEQ) are compositionally biased toward acidic residues. Leu-70 bears the Leucine amide mark. Positions 72–73 (EQ) are cleaved as a propeptide — removed in mature form.

As to expression, expressed by the skin glands.

Its subcellular location is the secreted. Its function is as follows. Has antiparasitic activity against trypomastigote form of T.cruzi (IC(50)=0.68 uM) in vitro but not against L.infantum. Probably acts by permeabilizing cell membranes. In vitro, shows no cytotoxicity against macrophages. Has antibacterial activity. The sequence is that of Dermaseptin-1 from Pithecopus nordestinus (Northeastern Brazilian leaf frog).